Reading from the N-terminus, the 284-residue chain is L-ribulose-5-phosphate 3-epimerase UlaE (284 aa).

The protein belongs to the L-ribulose-5-phosphate 3-epimerase family.

The catalysed reaction is L-ribulose 5-phosphate = L-xylulose 5-phosphate. Its pathway is cofactor degradation; L-ascorbate degradation; D-xylulose 5-phosphate from L-ascorbate: step 3/4. In terms of biological role, catalyzes the isomerization of L-xylulose-5-phosphate to L-ribulose-5-phosphate. Is involved in the anaerobic L-ascorbate utilization. The protein is L-ribulose-5-phosphate 3-epimerase UlaE of Escherichia coli (strain ATCC 8739 / DSM 1576 / NBRC 3972 / NCIMB 8545 / WDCM 00012 / Crooks).